Consider the following 209-residue polypeptide: Uracil phosphoribosyltransferase (209 aa).

5-phospho-alpha-D-ribose 1-diphosphate is bound by residues Arg-79, Arg-104, and Asp-131–Ser-139. Uracil-binding positions include Ile-194 and Gly-199–Ala-201. Asp-200 is a 5-phospho-alpha-D-ribose 1-diphosphate binding site.

It belongs to the UPRTase family. It depends on Mg(2+) as a cofactor.

The enzyme catalyses UMP + diphosphate = 5-phospho-alpha-D-ribose 1-diphosphate + uracil. It participates in pyrimidine metabolism; UMP biosynthesis via salvage pathway; UMP from uracil: step 1/1. Its activity is regulated as follows. Allosterically activated by GTP. Its function is as follows. Catalyzes the conversion of uracil and 5-phospho-alpha-D-ribose 1-diphosphate (PRPP) to UMP and diphosphate. This is Uracil phosphoribosyltransferase from Streptococcus uberis (strain ATCC BAA-854 / 0140J).